The sequence spans 357 residues: MEENKQRVKSMINILQLVAPGTPLREGIDNVLRAQTGGLIVLGYNEQIKSIVDGGFHINCAFSPASLYELAKMDGALILNETGSKILIANAQLVPDSSIDSIETGMRHRTAERVAKQTGSLVVAISQRRNVITLYQGNLRYTLKDIGVILTKANQAIQTLEKYKAVWNDGITNLGILEFEEVVTMSEVVHVLHSVEMVLRIKNEILSYIHELGTEGRLIRLQLTELLADLEAEAALLIKDYHQEKTQDHHQILKKLQDLANTQLLEDSDLVKLLGYPGQTSLEESVTPRGYRITSKISRVPPLIIENLINRFKTLQGVCRATINELDDVEGIGEVRAKKIREGLKRIQEHLYMSRHN.

The DAC domain maps to 8–146; the sequence is VKSMINILQL…GNLRYTLKDI (139 aa). Residues G75, L93, and 106–110 contribute to the ATP site; that span reads MRHRT.

It belongs to the DisA family. As to quaternary structure, homooctamer. Mg(2+) serves as cofactor.

The catalysed reaction is 2 ATP = 3',3'-c-di-AMP + 2 diphosphate. Participates in a DNA-damage check-point that is active prior to asymmetric division when DNA is damaged. DisA forms globular foci that rapidly scan along the chromosomes during sporulation, searching for lesions. When a lesion is present, DisA pauses at the lesion site. This triggers a cellular response that culminates in a temporary block in sporulation initiation. Its function is as follows. Also has diadenylate cyclase activity, catalyzing the condensation of 2 ATP molecules into cyclic di-AMP (c-di-AMP). c-di-AMP acts as a signaling molecule that couples DNA integrity with progression of sporulation. The rise in c-di-AMP level generated by DisA while scanning the chromosome, operates as a positive signal that advances sporulation; upon encountering a lesion, the DisA focus arrests at the damaged site and halts c-di-AMP synthesis. This chain is DNA integrity scanning protein DisA, found in Bacillus cereus (strain ATCC 14579 / DSM 31 / CCUG 7414 / JCM 2152 / NBRC 15305 / NCIMB 9373 / NCTC 2599 / NRRL B-3711).